We begin with the raw amino-acid sequence, 481 residues long: UDP-N-acetylmuramate--L-alanine ligase (481 aa).

123–129 is an ATP binding site; that stretch reads GTHGKTT.

This sequence belongs to the MurCDEF family.

The protein resides in the cytoplasm. It carries out the reaction UDP-N-acetyl-alpha-D-muramate + L-alanine + ATP = UDP-N-acetyl-alpha-D-muramoyl-L-alanine + ADP + phosphate + H(+). It participates in cell wall biogenesis; peptidoglycan biosynthesis. In terms of biological role, cell wall formation. This is UDP-N-acetylmuramate--L-alanine ligase from Pseudomonas fluorescens (strain SBW25).